A 235-amino-acid polypeptide reads, in one-letter code: MEWSTTSNVENVRVAFMPPPWPESSSFNSLHSFNFDPYAGNSYTPGDTQTGPVISVPESEKIMNAYRFPNNNNEMIKKKRLTSGQLASLERSFQEEIKLDSDRKVKLSRELGLQPRQIAVWFQNRRARWKAKQLEQLYDSLRQEYDVVSREKQMLHDEVKKLRALLRDQGLIKKQISAGTIKVSGEEDTVEISSVVVAHPRTENMNANQITGGNQVYGQYNNPMLVASSGWPSYP.

A DNA-binding region (homeobox) is located at residues 74–133; sequence EMIKKKRLTSGQLASLERSFQEEIKLDSDRKVKLSRELGLQPRQIAVWFQNRRARWKAKQ. The interval 134–162 is leucine-zipper; it reads LEQLYDSLRQEYDVVSREKQMLHDEVKKL.

It belongs to the HD-ZIP homeobox family. Class I subfamily. As to expression, widely expressed.

It is found in the nucleus. Putative transcription factor. The protein is Putative homeobox-leucine zipper protein ATHB-51 (ATHB-51) of Arabidopsis thaliana (Mouse-ear cress).